The sequence spans 426 residues: Histidine--tRNA ligase (426 aa).

This sequence belongs to the class-II aminoacyl-tRNA synthetase family.

Its subcellular location is the cytoplasm. It catalyses the reaction tRNA(His) + L-histidine + ATP = L-histidyl-tRNA(His) + AMP + diphosphate + H(+). The polypeptide is Histidine--tRNA ligase (Saccharolobus islandicus (strain Y.G.57.14 / Yellowstone #1) (Sulfolobus islandicus)).